The primary structure comprises 244 residues: Ribonuclease PH (244 aa).

Residues R90 and 128-130 (GTR) each bind phosphate.

This sequence belongs to the RNase PH family. In terms of assembly, homohexameric ring arranged as a trimer of dimers.

It carries out the reaction tRNA(n+1) + phosphate = tRNA(n) + a ribonucleoside 5'-diphosphate. In terms of biological role, phosphorolytic 3'-5' exoribonuclease that plays an important role in tRNA 3'-end maturation. Removes nucleotide residues following the 3'-CCA terminus of tRNAs; can also add nucleotides to the ends of RNA molecules by using nucleoside diphosphates as substrates, but this may not be physiologically important. Probably plays a role in initiation of 16S rRNA degradation (leading to ribosome degradation) during starvation. This chain is Ribonuclease PH, found in Cutibacterium acnes (strain DSM 16379 / KPA171202) (Propionibacterium acnes).